Here is a 473-residue protein sequence, read N- to C-terminus: MKWSTKQRYRTYDSYSESDLESLRKLALKSPWKSNFHIEPETGLLNDPNGFSYFNEKWHLFYQHFPFGPVHGLKSWVHLVSDDLVHFEKTGLVLYPDTKYDNAGVYSGSALAFENFLFLIYTGNHRGEDWVRTPYQLGAKIDKNNQLVKFTEPLIYPDFSQTTDHFRDPQIFSFQGQIYCLIGAQSSQKNGIIKLYKAIENNLTDWKDLGNLDFSKEKMGYMIECPNLIFINGRSVLVFCPQGLDKSIVKYDNIYPNVYVIADDFTTGSKNQLKNAGQLINLDEGFDCYATQSFNAPDGSAYAISWLGLPETSYPTDKYNVQGVLSMVKKLSIKDNKLYQYPVEKMKELRQMEQDLLLADNNIITSNSYELEVDFRQQTSTLLSLMTNEKGDSALKVEIDKENNTITLIRNYEKRLAHVKIEKMNVFIDQSIFEIFINDGEKVLSDCRVFPNKNQYSIRSQNPIKIKLWELKK.

Substrate contacts are provided by residues Leu-44–Asp-47, Gln-63, Tyr-106–Ser-107, Arg-167–Asp-168, and Glu-224. Asp-47 is an active-site residue.

Belongs to the glycosyl hydrolase 32 family.

It localises to the cytoplasm. The catalysed reaction is Hydrolysis of terminal non-reducing beta-D-fructofuranoside residues in beta-D-fructofuranosides.. It functions in the pathway glycan biosynthesis; sucrose metabolism. The sequence is that of Sucrose-6-phosphate hydrolase (scrB) from Lactococcus lactis subsp. lactis (Streptococcus lactis).